We begin with the raw amino-acid sequence, 258 residues long: MKIQTNAVNVLDRTSFYLQAGLLKKTPAWYNVVARIPPVTKFAREPKLHDPVSGKYKGELDIMTDRLNRNTETYKTRAGSSDRQTAAVHKPSKLRFIEDKLRSLFFQQHPWELSRPKVLVENMGNEQYDWSRMLQLGKPLDGESVVQRTLYLLKSGAHREMLAAYDQARFEFYRLRMQQELEEQIAYEEATMVGAVFKTTAVEHGLQQEQKVLDKWKEDVVAGLQLMSAKKNSTKQSWAEATEEKEEQDSAEPEELKL.

Over residues 230-239 (KKNSTKQSWA) the composition is skewed to polar residues. The interval 230–258 (KKNSTKQSWAEATEEKEEQDSAEPEELKL) is disordered. The segment covering 241–258 (ATEEKEEQDSAEPEELKL) has biased composition (acidic residues).

The protein belongs to the mitochondrion-specific ribosomal protein mS23 family. Component of the mitochondrial small ribosomal subunit.

The protein resides in the mitochondrion. In Eremothecium gossypii (strain ATCC 10895 / CBS 109.51 / FGSC 9923 / NRRL Y-1056) (Yeast), this protein is Small ribosomal subunit protein mS23 (RSM25).